A 78-amino-acid chain; its full sequence is Large ribosomal subunit protein bL28 (78 aa).

The tract at residues 1-23 (MSRVCQVTGKRPMVGNNRSHAKN) is disordered.

This sequence belongs to the bacterial ribosomal protein bL28 family.

The sequence is that of Large ribosomal subunit protein bL28 from Shewanella pealeana (strain ATCC 700345 / ANG-SQ1).